Here is a 968-residue protein sequence, read N- to C-terminus: Polycystin-2 (968 aa).

Over residues 1 to 11 (MVNSSRVQPQQ) the composition is skewed to polar residues. Disordered regions lie at residues 1–28 (MVNS…DPGR) and 58–181 (RIRQ…LPLE). The Cytoplasmic segment spans residues 1–219 (MVNSSRVQPQ…STNREKYLKS (219 aa)). Residues 62–83 (AAARDPPAGAAASPSPPLSSCS) are compositionally biased toward low complexity. Ser-76 and Ser-80 each carry phosphoserine. Acidic residues predominate over residues 95-107 (EAEEEEEEVEGEE). A compositionally biased stretch (low complexity) spans 123 to 139 (RRSAASSAVSSVGARSR). The residue at position 137 (Arg-137) is an Omega-N-methylarginine. A helical transmembrane segment spans residues 220 to 241 (VLRELVTYLLFLIVLCILTYGM). The Extracellular portion of the chain corresponds to 242 to 468 (MSSNVYYYTR…PLKLIRYVTT (227 aa)). Asn-299 and Asn-305 each carry an N-linked (GlcNAc...) asparagine glycan. A glycan (N-linked (GlcNAc...) (complex) asparagine) is linked at Asn-328. A disulfide bond links Cys-331 and Cys-344. Residues Asn-362 and Asn-375 are each glycosylated (N-linked (GlcNAc...) asparagine). A helical transmembrane segment spans residues 469–489 (FDFFLAACEIIFCFFIFYYVV). At 490–505 (EEILEIRIHKLHYFRS) the chain is on the cytoplasmic side. A helical membrane pass occupies residues 506-526 (FWNCLDVVIVVLSVVAIGINI). Topologically, residues 527–552 (YRTSNVEVLLQFLEDQNTFPNFEHLA) are extracellular. The helical transmembrane segment at 553–573 (YWQIQFNNIAAVTVFFVWIKL) threads the bilayer. Gln-557 provides a ligand contact to cholesterol. Residues 574-597 (FKFINFNRTMSQLSTTMSRCAKDL) are Cytoplasmic-facing. Residues 598–619 (FGFAIMFFIIFLAYAQLAYLVF) form a helical membrane-spanning segment. The Extracellular segment spans residues 620 to 631 (GTQVDDFSTFQE). Residues 632 to 646 (CIFTQFRIILGDINF) constitute an intramembrane region (pore-forming). Ca(2+) is bound at residue Leu-641. A Selectivity filter motif is present at residues 641-643 (LGD). Over 647–654 (AEIEEANR) the chain is Extracellular. The chain crosses the membrane as a helical span at residues 655–675 (VLGPIYFTTFVFFMFFILLNM). Over 676-968 (FLAIINDTYS…GGNGSSNVHV (293 aa)) the chain is Cytoplasmic. Residues 750 to 785 (HTDAEIEAIFTKYDQDGDQELTEHEHQQMRDDLEKE) enclose the EF-hand domain. 5 residues coordinate Ca(2+): Asp-763, Asp-765, Asp-767, Glu-769, and Glu-774. The segment at 764–831 (QDGDQELTEH…HSSRRRGSIS (68 aa)) is disordered. The span at 770-795 (LTEHEHQQMRDDLEKEREDLDLDHSS) shows a compositional bias: basic and acidic residues. Residues 796-807 (LPRPMSSRSFPR) show a composition bias toward low complexity. Phosphoserine is present on residues Ser-801, Ser-808, Ser-812, and Ser-829. The interval 803–822 (RSFPRSLDDSEEDDDEDSGH) is linker. An important for interaction with PACS1 and PACS2 region spans residues 810–821 (DDSEEDDDEDSG). Residues 833–872 (GVSYEEFQVLVRRVDRMEHSIGSIVSKIDAVIVKLEIMER) adopt a coiled-coil conformation. Residues 917–968 (ESDDAASQISHGLGTPVGLNGQPRPRSSRPSSSQSTEGMEGAGGNGSSNVHV) form a disordered region. The segment covering 938–951 (QPRPRSSRPSSSQS) has biased composition (low complexity).

It belongs to the polycystin family. Homotetramer. Component of the heterotetrameric polycystin channel complex with PKD1; the tetramer contains one PKD1 chain and three PKD2 chains. Isoform 1 interacts with PKD1 while isoform 3 does not. Interacts with PKD1L1; probably forms a Ca(2+) channel. Interacts with CD2AP. Interacts with HAX1. Interacts with NEK8. Part of a complex containing AKAP5, ADCY5, ADCY6 and PDE4C. Interacts (via C-terminus) with TRPV4 (via C-terminus). Interacts (via C-terminal acidic region) with PACS1 and PACS2; these interactions retain the protein in the endoplasmic reticulum and prevent trafficking to the cell membrane. Interacts with TMEM33. Form a heterotetramer with TRPC1 with a 2:2 stoichiometry; has distinct channel properties separate from PKD2 or TRPC1 homomers alone. Interacts with TMEM120A; TMEM120A inhibits PKD2 channel activity through the physical association of PKD2 with TMEM120A. Interacts (via N-terminus) with RYR2; regulates RYR2 channel activity. Post-translationally, phosphorylated. Phosphorylation is important for protein function; a mutant that lacks the N-terminal phosphorylation sites cannot complement a zebrafish pkd2-deficient mutant. PKD-mediated phosphorylation at the C-terminus regulates its function in the release of Ca(2+) stores from the endoplasmic reticulum. Phosphorylation at Ser-812 regulates PKD2 trafficking. Phosphorylation at Ser-76 is required for PKD2 trafficking to or retention at the lateral plasma membrane. Phosphorylation at Ser-801, Ser-812 and Ser-829 regulates PKD2 channel activity. In terms of processing, N-glycosylated. The four subunits in a tetramer probably differ in the extent of glycosylation; simultaneous glycosylation of all experimentally validated sites would probably create steric hindrance. Thus, glycosylation at Asn-305 is not compatible with glycosylation at Asn-328; only one of these two residues is glycosylated at a given time. Sumoylated by SUMO1; sumoylation regulates PKD2 membrane recycling and is necessary for intravascular pressure-induced arterial contractility. As to expression, detected in fetal and adult kidney. Detected at the thick ascending limb of the loop of Henle, at distal tubules, including the distal convoluted tubule and cortical collecting tubules, with weak staining of the collecting duct. Detected on placenta syncytiotrophoblasts (at protein level). Strongly expressed in ovary, fetal and adult kidney, testis, and small intestine. Not detected in peripheral leukocytes.

The protein resides in the cell projection. It is found in the cilium membrane. Its subcellular location is the endoplasmic reticulum membrane. The protein localises to the cell membrane. It localises to the basolateral cell membrane. The protein resides in the cytoplasmic vesicle membrane. It is found in the golgi apparatus. Its subcellular location is the vesicle. The protein localises to the secreted. It localises to the extracellular exosome. It catalyses the reaction K(+)(in) = K(+)(out). It carries out the reaction Na(+)(in) = Na(+)(out). The enzyme catalyses Ca(2+)(in) = Ca(2+)(out). Its activity is regulated as follows. Channel activity is regulated by phosphorylation. Channel activity is regulated by intracellular Ca(2+). At the endoplasmic reticulum membrane (ER), TMEM33 enhances its channel activity. TMEM120A inhibits the channel activity of PKD2, and mediates mechanosensitivity of the PKD2-TMEM120A channel complex. PKD1/PKD2 complex on the plasma membrane is activated by PKD1 N-terminus. Its function is as follows. Forms a nonselective cation channel. Can function as a homotetrameric ion channel or can form heteromer with PKD1. Displays distinct function depending on its subcellular localization and regulation by its binding partners. In primary cilium functions as a cation channel, with a preference for monovalent cations over divalent cations that allows K(+), Na(+) and Ca(2+) influx, with low selectivity for Ca(2+). Involved in fluid-flow mechanosensation by the primary cilium in renal epithelium. In the endoplasmic reticulum, likely functions as a K(+) channel to facilitate Ca(2+) release. The heterotetrameric PKD1/PKD2 channel has higher Ca(2+) permeability than homomeric PKD2 channel and acts as a primarily Ca(2+)-permeable channel. Interacts with and acts as a regulator of a number of other channels, such as TRPV4, TRPC1, IP3R, RYR2, ultimately further affecting intracellular signaling, to modulate intracellular Ca(2+) signaling. Together with TRPV4, forms mechano- and thermosensitive channels in cilium. In cardiomyocytes, PKD2 modulates Ca(2+) release from stimulated RYR2 receptors through direct association. Also involved in left-right axis specification via its role in sensing nodal flow; forms a complex with PKD1L1 in cilia to facilitate flow detection in left-right patterning. Acts as a regulator of cilium length together with PKD1. Mediates systemic blood pressure and contributes to the myogenic response in cerebral arteries though vasoconstriction. In Homo sapiens (Human), this protein is Polycystin-2.